The primary structure comprises 95 residues: Aspartyl/glutamyl-tRNA(Asn/Gln) amidotransferase subunit C (95 aa).

Belongs to the GatC family. In terms of assembly, heterotrimer of A, B and C subunits.

It carries out the reaction L-glutamyl-tRNA(Gln) + L-glutamine + ATP + H2O = L-glutaminyl-tRNA(Gln) + L-glutamate + ADP + phosphate + H(+). It catalyses the reaction L-aspartyl-tRNA(Asn) + L-glutamine + ATP + H2O = L-asparaginyl-tRNA(Asn) + L-glutamate + ADP + phosphate + 2 H(+). In terms of biological role, allows the formation of correctly charged Asn-tRNA(Asn) or Gln-tRNA(Gln) through the transamidation of misacylated Asp-tRNA(Asn) or Glu-tRNA(Gln) in organisms which lack either or both of asparaginyl-tRNA or glutaminyl-tRNA synthetases. The reaction takes place in the presence of glutamine and ATP through an activated phospho-Asp-tRNA(Asn) or phospho-Glu-tRNA(Gln). The protein is Aspartyl/glutamyl-tRNA(Asn/Gln) amidotransferase subunit C of Azoarcus sp. (strain BH72).